The primary structure comprises 106 residues: Nucleoid-associated protein bll8115 (106 aa).

The protein belongs to the YbaB/EbfC family. In terms of assembly, homodimer.

The protein localises to the cytoplasm. It is found in the nucleoid. Its function is as follows. Binds to DNA and alters its conformation. May be involved in regulation of gene expression, nucleoid organization and DNA protection. The protein is Nucleoid-associated protein bll8115 of Bradyrhizobium diazoefficiens (strain JCM 10833 / BCRC 13528 / IAM 13628 / NBRC 14792 / USDA 110).